The sequence spans 618 residues: UvrABC system protein C (618 aa).

The GIY-YIG domain occupies 20 to 98 (TAPGVYRMYA…IKSLSPRYNV (79 aa)). A UVR domain is found at 207-242 (DQLGEEIMHSMQQASEALEFERAARLRDLLSSLRSM).

This sequence belongs to the UvrC family. As to quaternary structure, interacts with UvrB in an incision complex.

It localises to the cytoplasm. Its function is as follows. The UvrABC repair system catalyzes the recognition and processing of DNA lesions. UvrC both incises the 5' and 3' sides of the lesion. The N-terminal half is responsible for the 3' incision and the C-terminal half is responsible for the 5' incision. This is UvrABC system protein C from Xanthomonas campestris pv. campestris (strain B100).